We begin with the raw amino-acid sequence, 393 residues long: Putative serpin-Z6A (393 aa).

Residues 336 to 360 form an RCL region; it reads GTEAAAATAVLMEGAARYAPPPPPR.

The protein belongs to the serpin family.

In terms of biological role, probable serine protease inhibitor. This chain is Putative serpin-Z6A, found in Oryza sativa subsp. japonica (Rice).